Reading from the N-terminus, the 122-residue chain is Large ribosomal subunit protein uL14 (122 aa).

This sequence belongs to the universal ribosomal protein uL14 family. As to quaternary structure, part of the 50S ribosomal subunit. Forms a cluster with proteins L3 and L19. In the 70S ribosome, L14 and L19 interact and together make contacts with the 16S rRNA in bridges B5 and B8.

Its function is as follows. Binds to 23S rRNA. Forms part of two intersubunit bridges in the 70S ribosome. The protein is Large ribosomal subunit protein uL14 of Nitrosomonas eutropha (strain DSM 101675 / C91 / Nm57).